Reading from the N-terminus, the 368-residue chain is Ankyrin repeat domain-containing protein 40 (368 aa).

N-acetylmethionine is present on Met-1. 2 ANK repeats span residues 9 to 38 (EQQERLREAAALGDIREVQKLVESGVDVNS) and 43 to 72 (NGWTCLHWACKRNHGQVVSYLLKSGADKEI). 3 disordered regions span residues 93–115 (MGVEEEDDDDDDDDNLPQLKKES), 139–176 (DSAQMQNGGPSTPPASPPADGSPPLLPPGEPPLLGTFP), and 196–238 (ILRT…NGTY). The segment covering 95–107 (VEEEDDDDDDDDN) has biased composition (acidic residues). Over residues 149–169 (STPPASPPADGSPPLLPPGEP) the composition is skewed to pro residues. Over residues 212-224 (PVSQSRSLFSSVP) the composition is skewed to polar residues.

In Homo sapiens (Human), this protein is Ankyrin repeat domain-containing protein 40 (ANKRD40).